We begin with the raw amino-acid sequence, 188 residues long: Elongation factor P (188 aa).

It belongs to the elongation factor P family.

The protein localises to the cytoplasm. The protein operates within protein biosynthesis; polypeptide chain elongation. Its function is as follows. Involved in peptide bond synthesis. Stimulates efficient translation and peptide-bond synthesis on native or reconstituted 70S ribosomes in vitro. Probably functions indirectly by altering the affinity of the ribosome for aminoacyl-tRNA, thus increasing their reactivity as acceptors for peptidyl transferase. This is Elongation factor P from Exiguobacterium sibiricum (strain DSM 17290 / CCUG 55495 / CIP 109462 / JCM 13490 / 255-15).